The chain runs to 210 residues: uncharacterized protein (210 aa).

This is an uncharacterized protein from Escherichia coli (strain K12).